The following is a 208-amino-acid chain: Thymidylate kinase (208 aa).

9 to 16 (GGEGCGKS) is a binding site for ATP.

It belongs to the thymidylate kinase family.

It catalyses the reaction dTMP + ATP = dTDP + ADP. Phosphorylation of dTMP to form dTDP in both de novo and salvage pathways of dTTP synthesis. In Dehalococcoides mccartyi (strain ATCC BAA-2100 / JCM 16839 / KCTC 5957 / BAV1), this protein is Thymidylate kinase.